The chain runs to 364 residues: Dihydroorotate dehydrogenase (quinone) (364 aa).

Residues 78–82 (AGFDK) and Thr102 each bind FMN. Lys82 serves as a coordination point for substrate. Residue 127 to 131 (NRMGF) participates in substrate binding. FMN is bound by residues Asn156 and Asn189. Residue Asn189 participates in substrate binding. Residue Ser192 is the Nucleophile of the active site. Asn194 contributes to the substrate binding site. The FMN site is built by Lys227 and Thr255. Position 256–257 (256–257 (NT)) interacts with substrate. FMN contacts are provided by residues Gly285, Gly314, and 335–336 (YT).

This sequence belongs to the dihydroorotate dehydrogenase family. Type 2 subfamily. As to quaternary structure, monomer. It depends on FMN as a cofactor.

The protein resides in the cell membrane. The enzyme catalyses (S)-dihydroorotate + a quinone = orotate + a quinol. It participates in pyrimidine metabolism; UMP biosynthesis via de novo pathway; orotate from (S)-dihydroorotate (quinone route): step 1/1. In terms of biological role, catalyzes the conversion of dihydroorotate to orotate with quinone as electron acceptor. The protein is Dihydroorotate dehydrogenase (quinone) of Thermosynechococcus vestitus (strain NIES-2133 / IAM M-273 / BP-1).